A 311-amino-acid chain; its full sequence is Malate dehydrogenase (311 aa).

NAD(+) contacts are provided by residues 7 to 13 and D34; that span reads GAAGGIG. The substrate site is built by R81 and R87. Residues N94 and 117–119 contribute to the NAD(+) site; that span reads ITN. Positions 119 and 153 each coordinate substrate. The active-site Proton acceptor is the H177. M227 provides a ligand contact to NAD(+).

Belongs to the LDH/MDH superfamily. MDH type 1 family. As to quaternary structure, homodimer.

It catalyses the reaction (S)-malate + NAD(+) = oxaloacetate + NADH + H(+). In terms of biological role, catalyzes the reversible oxidation of malate to oxaloacetate. This is Malate dehydrogenase from Aeromonas hydrophila subsp. hydrophila (strain ATCC 7966 / DSM 30187 / BCRC 13018 / CCUG 14551 / JCM 1027 / KCTC 2358 / NCIMB 9240 / NCTC 8049).